We begin with the raw amino-acid sequence, 185 residues long: Ribosome-recycling factor (185 aa).

The protein belongs to the RRF family.

Its subcellular location is the cytoplasm. In terms of biological role, responsible for the release of ribosomes from messenger RNA at the termination of protein biosynthesis. May increase the efficiency of translation by recycling ribosomes from one round of translation to another. The chain is Ribosome-recycling factor from Azoarcus sp. (strain BH72).